The following is a 427-amino-acid chain: Probable WRKY transcription factor 35 (427 aa).

Disordered stretches follow at residues 1 to 45 and 266 to 336; these read MDNF…DLHV and YTSE…HPPF. Residues 23-40 are compositionally biased toward pro residues; the sequence is SPGPPEGPSPSSMSPPPT. The segment at residues 209–275 is a DNA-binding region (WRKY); the sequence is SGEVVPSDLW…YTSEHNHPWP (67 aa). Residues 284–310 are compositionally biased toward low complexity; that stretch reads STRSSSSSSLNPSSKSSTAAATTSPSS. Residues 311 to 333 are compositionally biased toward polar residues; that stretch reads RVFQNNSSKDEPNNSNLPSSSTH.

It belongs to the WRKY group II-e family.

The protein resides in the nucleus. Its function is as follows. Transcription factor. Interacts specifically with the W box (5'-(T)TGAC[CT]-3'), a frequently occurring elicitor-responsive cis-acting element. In Arabidopsis thaliana (Mouse-ear cress), this protein is Probable WRKY transcription factor 35 (WRKY35).